A 782-amino-acid chain; its full sequence is E3 ubiquitin-protein ligase SopA (782 aa).

The interval 137–171 (VSVSANNRPTVSEGRTPPVSPSLSLQATSSPSSPA) is disordered. Residues 157–171 (PSLSLQATSSPSSPA) are compositionally biased toward low complexity. Catalysis depends on cysteine 753, which acts as the Glycyl thioester intermediate.

This sequence belongs to the SopA E3 ligase family. Post-translationally, ubiquitinated in the presence of host E1 ubiquitin-activating enzyme, E2 ubiquitin-conjugating enzyme and ubiquitin.

It localises to the secreted. The protein resides in the host cell. It catalyses the reaction S-ubiquitinyl-[E2 ubiquitin-conjugating enzyme]-L-cysteine + [acceptor protein]-L-lysine = [E2 ubiquitin-conjugating enzyme]-L-cysteine + N(6)-ubiquitinyl-[acceptor protein]-L-lysine.. Effector proteins function to alter host cell physiology and promote bacterial survival in host tissues. This protein is an E3 ubiquitin ligase that interferes with host's ubiquitination pathway. The polypeptide is E3 ubiquitin-protein ligase SopA (sopA) (Salmonella newport (strain SL254)).